Consider the following 307-residue polypeptide: Fructokinase (307 aa).

The protein belongs to the carbohydrate kinase PfkB family.

It carries out the reaction D-fructose + ATP = D-fructose 6-phosphate + ADP + H(+). The sequence is that of Fructokinase (scrK) from Vibrio alginolyticus.